The following is a 264-amino-acid chain: Cysteine-rich repeat secretory protein 26 (264 aa).

A signal peptide spans 1 to 27 (MSSNIFGSVPILVVVAIQLLLVHNVSS). 2 consecutive Gnk2-homologous domains span residues 34–142 (YLNH…SVDS) and 148–261 (YKRM…LYPF).

This sequence belongs to the cysteine-rich repeat secretory protein family.

The protein localises to the secreted. This Arabidopsis thaliana (Mouse-ear cress) protein is Cysteine-rich repeat secretory protein 26 (CRRSP26).